The chain runs to 192 residues: Thymidine kinase (192 aa).

ATP contacts are provided by residues 9-16 (ASMNAGKS) and 87-90 (DEAQ). The Proton acceptor role is filled by E88. C145, C147, C182, and H185 together coordinate Zn(2+).

The protein belongs to the thymidine kinase family. In terms of assembly, homotetramer.

It localises to the cytoplasm. The catalysed reaction is thymidine + ATP = dTMP + ADP + H(+). The sequence is that of Thymidine kinase from Novosphingobium aromaticivorans (strain ATCC 700278 / DSM 12444 / CCUG 56034 / CIP 105152 / NBRC 16084 / F199).